Consider the following 87-residue polypeptide: Small ribosomal subunit protein uS17 (87 aa).

It belongs to the universal ribosomal protein uS17 family. Part of the 30S ribosomal subunit.

One of the primary rRNA binding proteins, it binds specifically to the 5'-end of 16S ribosomal RNA. The protein is Small ribosomal subunit protein uS17 of Macrococcus caseolyticus (strain JCSC5402) (Macrococcoides caseolyticum).